We begin with the raw amino-acid sequence, 340 residues long: UDP-3-O-(3-hydroxymyristoyl)glucosamine N-acyltransferase (340 aa).

Residue His-239 is the Proton acceptor of the active site.

The protein belongs to the transferase hexapeptide repeat family. LpxD subfamily. In terms of assembly, homotrimer.

The catalysed reaction is a UDP-3-O-[(3R)-3-hydroxyacyl]-alpha-D-glucosamine + a (3R)-hydroxyacyl-[ACP] = a UDP-2-N,3-O-bis[(3R)-3-hydroxyacyl]-alpha-D-glucosamine + holo-[ACP] + H(+). It catalyses the reaction UDP-3-O-[(3R)-3-hydroxytetradecanoyl]-alpha-D-glucosamine + (3R)-hydroxytetradecanoyl-[ACP] = UDP-2-N,3-O-bis[(3R)-3-hydroxytetradecanoyl]-alpha-D-glucosamine + holo-[ACP] + H(+). Its pathway is glycolipid biosynthesis; lipid IV(A) biosynthesis; lipid IV(A) from (3R)-3-hydroxytetradecanoyl-[acyl-carrier-protein] and UDP-N-acetyl-alpha-D-glucosamine: step 3/6. Catalyzes the N-acylation of UDP-3-O-(hydroxytetradecanoyl)glucosamine using 3-hydroxytetradecanoyl-ACP as the acyl donor. Is involved in the biosynthesis of lipid A, a phosphorylated glycolipid that anchors the lipopolysaccharide to the outer membrane of the cell. The chain is UDP-3-O-(3-hydroxymyristoyl)glucosamine N-acyltransferase from Wigglesworthia glossinidia brevipalpis.